We begin with the raw amino-acid sequence, 457 residues long: Aromatic amino acid transport protein AroP (457 aa).

The Cytoplasmic segment spans residues 1–20 (MMDSQQHGEQLKRGLKNRHI). Residues 21 to 41 (QLIALGGAIGTGLFLGSASVI) traverse the membrane as a helical segment. Glutamine 42 is a topological domain (periplasmic). Residues 43-63 (SAGPGIILGYAIAGFIAFLIM) form a helical membrane-spanning segment. Residues 64 to 86 (RQLGEMVVEEPVAGSFSHFAYKY) lie on the Cytoplasmic side of the membrane. Residues 87-107 (WGGFAGFASGWNYWVLYVLVA) form a helical membrane-spanning segment. The Periplasmic portion of the chain corresponds to 108–117 (MAELTAVGKY). Residues 118-138 (IQFWYPEIPTWASAAAFFVII) traverse the membrane as a helical segment. Topologically, residues 139-155 (NAINLTNVKVFGEMEFW) are cytoplasmic. A helical transmembrane segment spans residues 156–176 (FAIIKVIAVIAMILFGAWLLF). The Periplasmic segment spans residues 177–201 (SDTAGPQATVRNLWEQGGFLPHGWT). Residues 202-222 (GLVMMMAIIMFSFGGLELVGI) form a helical membrane-spanning segment. Over 223–240 (TAAEADNPEQSIPKATNQ) the chain is Cytoplasmic. A helical transmembrane segment spans residues 241–261 (VIYRILIFYIGSLAVLLSLLP). Topologically, residues 262–271 (WTRVTADTSP) are periplasmic. The chain crosses the membrane as a helical span at residues 272–292 (FVLIFHELGDTFVANALNIVV). Residues 293–333 (LTAALSVYNSCVYCNSRMLFGLAQQGNAPKALLNVDKRGVP) lie on the Cytoplasmic side of the membrane. Residues 334 to 354 (VSSILVSAVVTALCVLLNYLA) form a helical membrane-spanning segment. Over 355-358 (PESA) the chain is Periplasmic. Residues 359–379 (FGLLMALVVSALVINWAMISL) form a helical membrane-spanning segment. Topologically, residues 380–400 (AHMMFRRAKQQQGVKTRFPAL) are cytoplasmic. The helical transmembrane segment at 401-421 (FYPFGNVLCLLFMAAVLIIML) threads the bilayer. At 422 to 425 (MTPG) the chain is on the periplasmic side. A helical membrane pass occupies residues 426–446 (MAISVWLIPVWLLILGVGYLC). The Cytoplasmic segment spans residues 447 to 457 (KEKTAKTVKAH).

The protein belongs to the amino acid-polyamine-organocation (APC) superfamily. Amino acid transporter (AAT) (TC 2.A.3.1) family.

The protein localises to the cell inner membrane. It catalyses the reaction L-phenylalanine(in) + H(+)(in) = L-phenylalanine(out) + H(+)(out). The catalysed reaction is L-tryptophan(in) + H(+)(in) = L-tryptophan(out) + H(+)(out). The enzyme catalyses L-tyrosine(in) + H(+)(in) = L-tyrosine(out) + H(+)(out). In terms of biological role, permease that is involved in the active transport across the cytoplasmic membrane of all three aromatic amino acids, phenylalanine, tyrosine and tryptophan. In Salmonella typhi, this protein is Aromatic amino acid transport protein AroP (aroP).